Consider the following 440-residue polypeptide: MFLAQEIIRKKRDGHALSDEEIRFFINGIRDNTVSEGQIAALAMTIFFHDMTMPERVSLTMAMRDSGTVLDWKSLNLNGPVVDKHSTGGVGDVTSLMLGPMVAACGGYIPMISGRGLGHTGGTLDKLEAIPGFDIFPDDNRFRDIIKNVGVAIIGQTNSLAPADKRFYATRDITATVDSIPLITASILAKKLAEGLDALVMDVKVGSGAFMPTYALSEELAQAIVGVANGAGVRTTALLTDMNEVLASSAGNAVEVREAVRFLTGDYRNPRLLEVTMALCVEMLLSGGLAKDETEARAKLQQVLDNGQAAEIFGRMVAAQSGPADFVDNYERYLPAATLSKAVYADRSGFVTQMDTRALGMAVVAMGGGRRQASDSIDYSVGLTDMARLGEQVDGERPLAIIHAKSEASWQEAAAAVKAAINVDDTAAKTSPVVYRRISE.

Belongs to the thymidine/pyrimidine-nucleoside phosphorylase family. As to quaternary structure, homodimer.

The enzyme catalyses thymidine + phosphate = 2-deoxy-alpha-D-ribose 1-phosphate + thymine. The protein operates within pyrimidine metabolism; dTMP biosynthesis via salvage pathway; dTMP from thymine: step 1/2. Its function is as follows. The enzymes which catalyze the reversible phosphorolysis of pyrimidine nucleosides are involved in the degradation of these compounds and in their utilization as carbon and energy sources, or in the rescue of pyrimidine bases for nucleotide synthesis. This Cronobacter sakazakii (strain ATCC BAA-894) (Enterobacter sakazakii) protein is Thymidine phosphorylase.